The chain runs to 216 residues: MAINRIAHGSLFLTVVLFFLTVNYGEAIWLTIPTTGGTKCVSEEIQSNVVVLADYYVVDEHNPENTPAVSSKVTSPYGNNLHHQENVTHGQFAFTTQEAGNYLACFWIDSSHHLANPITLGVDWKMGIAAKDWDSVAKKEKIEGVELQLRRLEGLVLSIRENLNYIKDREAEMREVSETTNSRVAWFSIMSLGVCVVVVGSQILYLKRYFHKKKLI.

An N-terminal signal peptide occupies residues 1–27 (MAINRIAHGSLFLTVVLFFLTVNYGEA). The Lumenal portion of the chain corresponds to 28–183 (IWLTIPTTGG…REVSETTNSR (156 aa)). The 114-residue stretch at 38-151 (TKCVSEEIQS…IEGVELQLRR (114 aa)) folds into the GOLD domain. N86 carries an N-linked (GlcNAc...) asparagine glycan. Positions 137–159 (AKKEKIEGVELQLRRLEGLVLSI) form a coiled coil. An omega-N-methylated arginine mark is found at R169 and R174. A helical transmembrane segment spans residues 184 to 204 (VAWFSIMSLGVCVVVVGSQIL). The Cytoplasmic portion of the chain corresponds to 205-216 (YLKRYFHKKKLI). A COPII vesicle coat-binding motif is present at residues 209-210 (YF). Positions 209 to 216 (YFHKKKLI) match the COPI vesicle coat-binding motif.

Belongs to the EMP24/GP25L family. In terms of assembly, probably oligomerizes with other members of the EMP24/GP25L family. Associates with the COPI vesicle coat (coatomer). Associates with the COPII vesicle coat (coatomer). Interacts with p24beta2.

The protein resides in the endoplasmic reticulum membrane. Its function is as follows. Involved in vesicular protein trafficking. Mainly functions in the early secretory pathway. Thought to act as cargo receptor at the lumenal side for incorporation of secretory cargo molecules into transport vesicles and to be involved in vesicle coat formation at the cytoplasmic side. Interacts with p24beta2 at endoplasmic reticulum export sites for endoplasmic reticulum exit and coupled transport to the Golgi apparatus. Once in the Golgi, interacts very efficiently with the COPI machinery for retrograde transport back to the endoplasmic reticulum. The protein is Transmembrane emp24 domain-containing protein p24delta5 of Arabidopsis thaliana (Mouse-ear cress).